The chain runs to 370 residues: Homospermidine synthase (370 aa).

Belongs to the deoxyhypusine synthase family. Homotetramer. NAD(+) is required as a cofactor.

The enzyme catalyses putrescine + spermidine = sym-homospermidine + propane-1,3-diamine. It functions in the pathway alkaloid biosynthesis; pyrrolizidine alkaloid biosynthesis. Functionally, catalyzes the transfer of an aminobutyl unit from spermidine onto putrescine. The resulting polyamine homospermidine is a precursor in the biosynthesis of pyrrolizidine alkaloids. The polypeptide is Homospermidine synthase (HSS1) (Senecio vulgaris (Common groundsel)).